A 167-amino-acid chain; its full sequence is Lipoprotein signal peptidase (167 aa).

3 helical membrane-spanning segments follow: residues 10–30 (LIWL…KAWV), 68–88 (WQLW…AFWL), and 98–118 (SAVP…DRLM). Active-site residues include aspartate 124 and aspartate 142. Residues 138 to 158 (FNIADSAIVGGAIGIALFGLF) form a helical membrane-spanning segment.

This sequence belongs to the peptidase A8 family.

Its subcellular location is the cell inner membrane. It catalyses the reaction Release of signal peptides from bacterial membrane prolipoproteins. Hydrolyzes -Xaa-Yaa-Zaa-|-(S,diacylglyceryl)Cys-, in which Xaa is hydrophobic (preferably Leu), and Yaa (Ala or Ser) and Zaa (Gly or Ala) have small, neutral side chains.. It participates in protein modification; lipoprotein biosynthesis (signal peptide cleavage). Functionally, this protein specifically catalyzes the removal of signal peptides from prolipoproteins. The chain is Lipoprotein signal peptidase from Xanthomonas campestris pv. campestris (strain 8004).